Reading from the N-terminus, the 365-residue chain is Phospho-N-acetylmuramoyl-pentapeptide-transferase (365 aa).

The next 10 helical transmembrane spans lie at 29-49 (VGGL…IIVW), 73-93 (GTPT…VIIW), 97-117 (SNIY…LGLV), 133-153 (ILNK…IMFI), 171-191 (IVCK…VGTS), 202-222 (GLVI…TWVV), 242-262 (LVVV…FNSY), 266-286 (IFMG…VSIL), 291-311 (YLLL…IFQV), and 341-361 (IVVR…VIFI).

It belongs to the glycosyltransferase 4 family. MraY subfamily. It depends on Mg(2+) as a cofactor.

Its subcellular location is the cell inner membrane. It carries out the reaction UDP-N-acetyl-alpha-D-muramoyl-L-alanyl-gamma-D-glutamyl-meso-2,6-diaminopimeloyl-D-alanyl-D-alanine + di-trans,octa-cis-undecaprenyl phosphate = di-trans,octa-cis-undecaprenyl diphospho-N-acetyl-alpha-D-muramoyl-L-alanyl-D-glutamyl-meso-2,6-diaminopimeloyl-D-alanyl-D-alanine + UMP. The protein operates within cell wall biogenesis; peptidoglycan biosynthesis. Functionally, catalyzes the initial step of the lipid cycle reactions in the biosynthesis of the cell wall peptidoglycan: transfers peptidoglycan precursor phospho-MurNAc-pentapeptide from UDP-MurNAc-pentapeptide onto the lipid carrier undecaprenyl phosphate, yielding undecaprenyl-pyrophosphoryl-MurNAc-pentapeptide, known as lipid I. The chain is Phospho-N-acetylmuramoyl-pentapeptide-transferase from Blochmanniella floridana.